We begin with the raw amino-acid sequence, 222 residues long: uncharacterized protein (222 aa).

An N-terminal signal peptide occupies residues 1–20 (MRTTSFAKVAALCGLLALSG). Residue Cys21 is the site of N-palmitoyl cysteine attachment. Cys21 is lipidated: S-diacylglycerol cysteine.

The protein resides in the cell membrane. This is an uncharacterized protein from Escherichia coli O157:H7.